A 488-amino-acid polypeptide reads, in one-letter code: Pup--protein ligase (488 aa).

E33 provides a ligand contact to Mg(2+). R76 contributes to the ATP binding site. Position 78 (Y78) interacts with Mg(2+). D80 acts as the Proton acceptor in catalysis. E86 is a binding site for Mg(2+). Residues T89 and W453 each contribute to the ATP site.

Belongs to the Pup ligase/Pup deamidase family. Pup-conjugating enzyme subfamily.

It carries out the reaction ATP + [prokaryotic ubiquitin-like protein]-L-glutamate + [protein]-L-lysine = ADP + phosphate + N(6)-([prokaryotic ubiquitin-like protein]-gamma-L-glutamyl)-[protein]-L-lysine.. It participates in protein degradation; proteasomal Pup-dependent pathway. It functions in the pathway protein modification; protein pupylation. Functionally, catalyzes the covalent attachment of the prokaryotic ubiquitin-like protein modifier Pup to the proteasomal substrate proteins, thereby targeting them for proteasomal degradation. This tagging system is termed pupylation. The ligation reaction involves the side-chain carboxylate of the C-terminal glutamate of Pup and the side-chain amino group of a substrate lysine. The sequence is that of Pup--protein ligase from Bifidobacterium adolescentis (strain ATCC 15703 / DSM 20083 / NCTC 11814 / E194a).